The primary structure comprises 176 residues: NAD(P)H-quinone oxidoreductase subunit 6, chloroplastic (176 aa).

5 helical membrane-spanning segments follow: residues 10–30 (FLLV…VLLT), 32–52 (PIFS…LYIL), 63–83 (LLIY…FMNG), 92–112 (LWTV…ISLI), and 152–172 (FFLP…GAIV).

It belongs to the complex I subunit 6 family. As to quaternary structure, NDH is composed of at least 16 different subunits, 5 of which are encoded in the nucleus.

It is found in the plastid. The protein localises to the chloroplast thylakoid membrane. It carries out the reaction a plastoquinone + NADH + (n+1) H(+)(in) = a plastoquinol + NAD(+) + n H(+)(out). The enzyme catalyses a plastoquinone + NADPH + (n+1) H(+)(in) = a plastoquinol + NADP(+) + n H(+)(out). NDH shuttles electrons from NAD(P)H:plastoquinone, via FMN and iron-sulfur (Fe-S) centers, to quinones in the photosynthetic chain and possibly in a chloroplast respiratory chain. The immediate electron acceptor for the enzyme in this species is believed to be plastoquinone. Couples the redox reaction to proton translocation, and thus conserves the redox energy in a proton gradient. In Lotus japonicus (Lotus corniculatus var. japonicus), this protein is NAD(P)H-quinone oxidoreductase subunit 6, chloroplastic (ndhG).